Here is a 203-residue protein sequence, read N- to C-terminus: GTP cyclohydrolase-2 (203 aa).

49–53 (RIHSE) serves as a coordination point for GTP. Positions 54, 65, and 67 each coordinate Zn(2+). Residues Q70, 92-94 (EGR), and T114 each bind GTP. Catalysis depends on D126, which acts as the Proton acceptor. The Nucleophile role is filled by R128. GTP is bound by residues T149 and K154.

It belongs to the GTP cyclohydrolase II family. Requires Zn(2+) as cofactor.

It catalyses the reaction GTP + 4 H2O = 2,5-diamino-6-hydroxy-4-(5-phosphoribosylamino)-pyrimidine + formate + 2 phosphate + 3 H(+). It participates in cofactor biosynthesis; riboflavin biosynthesis; 5-amino-6-(D-ribitylamino)uracil from GTP: step 1/4. Its function is as follows. Catalyzes the conversion of GTP to 2,5-diamino-6-ribosylamino-4(3H)-pyrimidinone 5'-phosphate (DARP), formate and pyrophosphate. This is GTP cyclohydrolase-2 from Shewanella sp. (strain ANA-3).